Consider the following 229-residue polypeptide: Ras-related protein RabZ (229 aa).

Residues 1-39 (MGCFHSREPTATGKTKKEEPTSAVKTNKEEKSSNYVSEP) form a disordered region. A lipid anchor (N-myristoyl glycine) is attached at G2. C3 is lipidated: S-palmitoyl cysteine. Residues 15–32 (TKKEEPTSAVKTNKEEKS) are compositionally biased toward basic and acidic residues. 57-64 (GDQATGKS) provides a ligand contact to GTP. An Effector region motif is present at residues 79–88 (HKPSPIIIDC). GTP is bound by residues 106–110 (DTAGQ) and 164–167 (NKCD).

The protein belongs to the small GTPase superfamily. Rab family. Post-translationally, although this sequence lacks the C-terminal cysteine motifs subject to isoprenylation in other Rab proteins, it does have N-terminal myristoylation and S-palmitoylation sequence motifs.

In Dictyostelium discoideum (Social amoeba), this protein is Ras-related protein RabZ (rabZ).